A 369-amino-acid polypeptide reads, in one-letter code: 3,7-dimethylxanthine N-methyltransferase TCS1 (369 aa).

Tyr24 is a binding site for S-adenosyl-L-homocysteine. Residue Thr31 coordinates caffeine. The S-adenosyl-L-homocysteine site is built by Cys66, Asn71, Asp103, Leu104, Ser138, and Phe139. Positions 156, 159, and 160 each coordinate caffeine. Asn177 lines the Mg(2+) pocket. Arg225 contributes to the caffeine binding site. Mg(2+) is bound by residues Asp263, Phe265, and Asn266. Residue Phe321 participates in caffeine binding.

It belongs to the methyltransferase superfamily. Type-7 methyltransferase family. Mg(2+) is required as a cofactor.

It carries out the reaction 1,7-dimethylxanthine + S-adenosyl-L-methionine = caffeine + S-adenosyl-L-homocysteine + H(+). The enzyme catalyses theobromine + S-adenosyl-L-methionine = caffeine + S-adenosyl-L-homocysteine + H(+). It catalyses the reaction 7-methylxanthine + S-adenosyl-L-methionine = theobromine + S-adenosyl-L-homocysteine + H(+). It participates in alkaloid biosynthesis. Involved in the biosynthesis of caffeine in cv. Puer. Involved in the biosynthesis of theacrine in cv. Kucha, a caffeine-like xanthine alkaloid with diverse beneficial biological activities including anti-depressive, sedative, and hypnotic activities, improving learning and memory, increasing exercise activity, and preventing nonalcoholic fatty liver disease. Catalyzes the conversion of 7-methylxanthine (7mX) to theobromine and of theobromine to caffeine. Has 3-N- and 1-N-methylation activity. This Camellia sinensis var. assamica (Assam tea) protein is 3,7-dimethylxanthine N-methyltransferase TCS1.